A 585-amino-acid chain; its full sequence is ATP-dependent lipid A-core flippase (585 aa).

6 helical membrane-spanning segments follow: residues 25–45 (FLAALACMGVASLAEPVFPAI), 63–83 (WLFYPLAIMGIFLVRAIFGFL), 127–146 (IAYDVTGVAGAATNALTSLI), 150–170 (LSIVGLLVWLLWLNWQLTLIT), 250–270 (QSPLVQFFAASGVAIIMGVAL), and 277–297 (QTTVGSFVSFVTAMLMLMAPL). The ABC transmembrane type-1 domain occupies 26-309 (LAALACMGVA…VTDVNAPIQR (284 aa)). The ABC transporter domain occupies 341–577 (VEFDGVTFTY…DGLYARLYRM (237 aa)). 375 to 382 (GPSGSGKT) contacts ATP.

This sequence belongs to the ABC transporter superfamily. Lipid exporter (TC 3.A.1.106) family. In terms of assembly, homodimer.

It localises to the cell inner membrane. It catalyses the reaction ATP + H2O + lipid A-core oligosaccharideSide 1 = ADP + phosphate + lipid A-core oligosaccharideSide 2.. Involved in lipopolysaccharide (LPS) biosynthesis. Translocates lipid A-core from the inner to the outer leaflet of the inner membrane. Transmembrane domains (TMD) form a pore in the inner membrane and the ATP-binding domain (NBD) is responsible for energy generation. In Dechloromonas aromatica (strain RCB), this protein is ATP-dependent lipid A-core flippase.